Reading from the N-terminus, the 506-residue chain is Lysine--tRNA ligase (506 aa).

Glu416 and Glu423 together coordinate Mg(2+).

Belongs to the class-II aminoacyl-tRNA synthetase family. Homodimer. Mg(2+) serves as cofactor.

The protein resides in the cytoplasm. The enzyme catalyses tRNA(Lys) + L-lysine + ATP = L-lysyl-tRNA(Lys) + AMP + diphosphate. The protein is Lysine--tRNA ligase of Xylella fastidiosa (strain M12).